A 449-amino-acid chain; its full sequence is POU domain, class 3, transcription factor 1 (449 aa).

Disordered stretches follow at residues 1–22 (MATT…TGPL), 76–108 (GGGG…GGGG), 132–152 (AHHL…HQPQ), 184–251 (GLHH…PSSD), and 393–449 (KRMT…GSVQ). Composition is skewed to gly residues over residues 11–20 (GPGGGAGGTG) and 93–108 (AGGG…GGGG). Residues 132–143 (AHHLGPAMSPSP) are compositionally biased toward low complexity. Over residues 188–197 (ALHEDGHEAQ) the composition is skewed to basic and acidic residues. The segment covering 218 to 230 (AGGLHAAAAHLHP) has biased composition (low complexity). One can recognise a POU-specific domain in the interval 245-319 (EDAPSSDDLE…LLNKWLEETD (75 aa)). The segment at residues 337–396 (KRKKRTSIEVGVKGALESHFLKCPKPSAHEITGLADSLQLEKEVVRVWFCNRRQKEKRMT) is a DNA-binding region (homeobox). Positions 425–434 (PSAPPPPPPA) are enriched in pro residues.

This sequence belongs to the POU transcription factor family. Class-3 subfamily.

The protein resides in the nucleus. Transcription factor that binds to the octamer motif (5'-ATTTGCAT-3'). Acts as a transcriptional activator when binding cooperatively with SOX4, SOX11, or SOX12 to gene promoters. Acts as a transcriptional repressor of myelin-specific genes. The protein is POU domain, class 3, transcription factor 1 (Pou3f1) of Mus musculus (Mouse).